A 393-amino-acid chain; its full sequence is High mobility group protein DSP1 (393 aa).

The tract at residues 153-179 (QMQQQQQQQNVINSASPMSRVKADAKP) is disordered. 2 consecutive DNA-binding regions (HMG box) follow at residues 179-249 (PRGR…QNYV) and 271-339 (PKRS…TEYK). Residues 364-374 (LLAAAAQQQHQ) show a composition bias toward low complexity. The disordered stretch occupies residues 364–393 (LLAAAAQQQHQQLEEQHDDDDGDGDDDENQ). Over residues 379–393 (QHDDDDGDGDDDENQ) the composition is skewed to acidic residues.

Belongs to the HMGB family.

It is found in the nucleus. The protein resides in the chromosome. Its function is as follows. Binds preferentially single-stranded DNA and unwinds double-stranded DNA. This chain is High mobility group protein DSP1 (Dsp1), found in Drosophila melanogaster (Fruit fly).